The chain runs to 104 residues: MKSLLPLAILAALAVATLCYESHESMESYEISPFINRRNANTFMSPQQRWRAKAQKRVQERNKPAYEINREACDDYKLCERYAMVYGYNAAYNRYFRQRRGAKY.

Positions 1 to 19 are cleaved as a signal peptide; sequence MKSLLPLAILAALAVATLC. The residue at position 21 (glutamate 21) is a 4-carboxyglutamate. Phosphoserine occurs at positions 22, 25, and 28. One can recognise a Gla domain in the interval 51–97; it reads RAKAQKRVQERNKPAYEINREACDDYKLCERYAMVYGYNAAYNRYFR. Glutamate 60, glutamate 67, and glutamate 71 each carry 4-carboxyglutamate. A disulfide bridge links cysteine 73 with cysteine 79.

Belongs to the osteocalcin/matrix Gla protein family. Post-translationally, requires vitamin K-dependent gamma-carboxylation for its function.

It localises to the secreted. Functionally, associates with the organic matrix of bone and cartilage. Thought to act as an inhibitor of bone formation. This chain is Matrix Gla protein (Mgp), found in Mus musculus (Mouse).